Reading from the N-terminus, the 715-residue chain is Fatty acid oxidation complex subunit alpha (715 aa).

The segment at 1 to 190 (MTTTSAFMLN…KAGLVDDVVP (190 aa)) is enoyl-CoA hydratase. The 3-hydroxyacyl-CoA dehydrogenase stretch occupies residues 306-715 (GPLNSVGILG…WTNGETDQGN (410 aa)).

It in the N-terminal section; belongs to the enoyl-CoA hydratase/isomerase family. In the central section; belongs to the 3-hydroxyacyl-CoA dehydrogenase family. In terms of assembly, heterotetramer of two alpha chains (FadJ) and two beta chains (FadI).

The protein resides in the cytoplasm. It catalyses the reaction a (3S)-3-hydroxyacyl-CoA = a (2E)-enoyl-CoA + H2O. The catalysed reaction is a 4-saturated-(3S)-3-hydroxyacyl-CoA = a (3E)-enoyl-CoA + H2O. It carries out the reaction a (3S)-3-hydroxyacyl-CoA + NAD(+) = a 3-oxoacyl-CoA + NADH + H(+). The enzyme catalyses (3S)-3-hydroxybutanoyl-CoA = (3R)-3-hydroxybutanoyl-CoA. Its pathway is lipid metabolism; fatty acid beta-oxidation. Functionally, catalyzes the formation of a hydroxyacyl-CoA by addition of water on enoyl-CoA. Also exhibits 3-hydroxyacyl-CoA epimerase and 3-hydroxyacyl-CoA dehydrogenase activities. The polypeptide is Fatty acid oxidation complex subunit alpha (Salmonella paratyphi B (strain ATCC BAA-1250 / SPB7)).